Consider the following 325-residue polypeptide: Bifunctional nuclease 1 (325 aa).

The region spanning 117–252 is the BFN domain; that stretch reads CVHNNPQGGH…YLAYSDGMRV (136 aa). The UVR domain maps to 284–318; that stretch reads TKEFNILSKMMQAVDEERYDEAAEWRDKLGQFRAK.

The protein belongs to the bifunctional nuclease family.

Its subcellular location is the nucleus. Its function is as follows. Bifunctional nuclease with both RNase and DNase activities. Involved in basal defense response. Participates in abscisic acid-derived callose deposition following infection by a necrotrophic pathogen. The protein is Bifunctional nuclease 1 (BBD1) of Arabidopsis thaliana (Mouse-ear cress).